Consider the following 913-residue polypeptide: DNA mismatch repair protein MutS (913 aa).

Position 720-727 (720-727) interacts with ATP; it reads GPNASGKS.

Belongs to the DNA mismatch repair MutS family.

Its function is as follows. This protein is involved in the repair of mismatches in DNA. It is possible that it carries out the mismatch recognition step. This protein has a weak ATPase activity. The sequence is that of DNA mismatch repair protein MutS from Prochlorococcus marinus (strain AS9601).